Consider the following 103-residue polypeptide: N(4)-acetylcytidine amidohydrolase (103 aa).

The region spanning 7–93 (TFFERFEQDI…VIAEIYPGLE (87 aa)) is the ASCH domain. The Proton acceptor role is filled by Lys-21. Thr-24 (nucleophile) is an active-site residue. The active-site Proton donor is the Glu-74.

Belongs to the N(4)-acetylcytidine amidohydrolase family.

It catalyses the reaction N(4)-acetylcytidine + H2O = cytidine + acetate + H(+). It carries out the reaction N(4)-acetyl-2'-deoxycytidine + H2O = 2'-deoxycytidine + acetate + H(+). The enzyme catalyses N(4)-acetylcytosine + H2O = cytosine + acetate + H(+). Functionally, catalyzes the hydrolysis of N(4)-acetylcytidine (ac4C). The protein is N(4)-acetylcytidine amidohydrolase of Shewanella putrefaciens (strain CN-32 / ATCC BAA-453).